The chain runs to 416 residues: Exodeoxyribonuclease 7 large subunit (416 aa).

The protein belongs to the XseA family. Heterooligomer composed of large and small subunits.

The protein localises to the cytoplasm. It carries out the reaction Exonucleolytic cleavage in either 5'- to 3'- or 3'- to 5'-direction to yield nucleoside 5'-phosphates.. Its function is as follows. Bidirectionally degrades single-stranded DNA into large acid-insoluble oligonucleotides, which are then degraded further into small acid-soluble oligonucleotides. This Acidothermus cellulolyticus (strain ATCC 43068 / DSM 8971 / 11B) protein is Exodeoxyribonuclease 7 large subunit.